Consider the following 34-residue polypeptide: N(4)-(Beta-N-acetylglucosaminyl)-L-asparaginase (34 aa).

The active-site Nucleophile is the Thr-18.

This sequence belongs to the Ntn-hydrolase family. Heterotetramer of two alpha and two beta chains arranged as a dimer of alpha/beta heterodimers. Cleaved into an alpha and beta chain by autocatalysis; this activates the enzyme. The N-terminal residue of the beta subunit is responsible for the nucleophile hydrolase activity. Post-translationally, N-glycosylated.

The protein resides in the lysosome. The catalysed reaction is N(4)-(beta-N-acetyl-D-glucosaminyl)-L-asparagine + H2O = N-acetyl-beta-D-glucosaminylamine + L-aspartate + H(+). In terms of biological role, cleaves the GlcNAc-Asn bond which joins oligosaccharides to the peptide of asparagine-linked glycoproteins. The polypeptide is N(4)-(Beta-N-acetylglucosaminyl)-L-asparaginase (AGA) (Sus scrofa (Pig)).